The following is an 88-amino-acid chain: MIERYFVTEIGKIWSDENKYNTWAKVELLVCEGWAQIGLIPPTDIEKIKTNLTVNLPRMLELEAETKHDVVAFTRMLSETLGPEKKWI.

N(6)-(1,2-dicarboxyethyl)-AMP contacts are provided by residues 4-5 (RY) and 67-69 (KHD).

Belongs to the lyase 1 family. Adenylosuccinate lyase subfamily. As to quaternary structure, homotetramer and homodimer. Residues from neighboring subunits contribute catalytic and substrate-binding residues to each active site.

It carries out the reaction N(6)-(1,2-dicarboxyethyl)-AMP = fumarate + AMP. The catalysed reaction is (2S)-2-[5-amino-1-(5-phospho-beta-D-ribosyl)imidazole-4-carboxamido]succinate = 5-amino-1-(5-phospho-beta-D-ribosyl)imidazole-4-carboxamide + fumarate. The protein operates within purine metabolism; AMP biosynthesis via de novo pathway; AMP from IMP: step 2/2. Its pathway is purine metabolism; IMP biosynthesis via de novo pathway; 5-amino-1-(5-phospho-D-ribosyl)imidazole-4-carboxamide from 5-amino-1-(5-phospho-D-ribosyl)imidazole-4-carboxylate: step 2/2. Its function is as follows. Catalyzes two reactions in de novo purine nucleotide biosynthesis. Catalyzes the breakdown of 5-aminoimidazole- (N-succinylocarboxamide) ribotide (SAICAR or 2-[5-amino-1-(5-phospho-beta-D-ribosyl)imidazole-4-carboxamido]succinate) to 5-aminoimidazole-4-carboxamide ribotide (AICAR or 5-amino-1-(5-phospho-beta-D-ribosyl)imidazole-4-carboxamide) and fumarate, and of adenylosuccinate (ADS or N(6)-(1,2-dicarboxyethyl)-AMP) to adenosine monophosphate (AMP) and fumarate. This is Adenylosuccinate lyase (purB) from Spiroplasma citri.